Consider the following 122-residue polypeptide: Large ribosomal subunit protein bL12 (122 aa).

This sequence belongs to the bacterial ribosomal protein bL12 family. In terms of assembly, homodimer. Part of the ribosomal stalk of the 50S ribosomal subunit. Forms a multimeric L10(L12)X complex, where L10 forms an elongated spine to which 2 to 4 L12 dimers bind in a sequential fashion. Binds GTP-bound translation factors.

Its function is as follows. Forms part of the ribosomal stalk which helps the ribosome interact with GTP-bound translation factors. Is thus essential for accurate translation. This is Large ribosomal subunit protein bL12 from Histophilus somni (strain 129Pt) (Haemophilus somnus).